Consider the following 126-residue polypeptide: UPF0102 protein MXAN_3551 (126 aa).

Belongs to the UPF0102 family.

The chain is UPF0102 protein MXAN_3551 from Myxococcus xanthus (strain DK1622).